We begin with the raw amino-acid sequence, 360 residues long: Glutamate 5-kinase (360 aa).

Residue Lys7 participates in ATP binding. Substrate-binding residues include Ser47, Asp134, and Asn146. ATP contacts are provided by residues Thr166–Asp167 and Thr210–Lys216. One can recognise a PUA domain in the interval Val275 to Val356.

It belongs to the glutamate 5-kinase family.

It is found in the cytoplasm. The catalysed reaction is L-glutamate + ATP = L-glutamyl 5-phosphate + ADP. It functions in the pathway amino-acid biosynthesis; L-proline biosynthesis; L-glutamate 5-semialdehyde from L-glutamate: step 1/2. In terms of biological role, catalyzes the transfer of a phosphate group to glutamate to form L-glutamate 5-phosphate. This is Glutamate 5-kinase from Prochlorococcus marinus (strain AS9601).